Consider the following 37-residue polypeptide: Photosystem II reaction center protein T (37 aa).

A helical membrane pass occupies residues 3-23 (ALVYTFLLVSTLGIIFFAIFF).

Belongs to the PsbT family. In terms of assembly, PSII is composed of 1 copy each of membrane proteins PsbA, PsbB, PsbC, PsbD, PsbE, PsbF, PsbH, PsbI, PsbJ, PsbK, PsbL, PsbM, PsbT, PsbY, PsbZ, Psb30/Ycf12, at least 3 peripheral proteins of the oxygen-evolving complex and a large number of cofactors. It forms dimeric complexes.

It localises to the plastid. It is found in the chloroplast thylakoid membrane. In terms of biological role, found at the monomer-monomer interface of the photosystem II (PS II) dimer, plays a role in assembly and dimerization of PSII. PSII is a light-driven water plastoquinone oxidoreductase, using light energy to abstract electrons from H(2)O, generating a proton gradient subsequently used for ATP formation. This Cucumis sativus (Cucumber) protein is Photosystem II reaction center protein T.